A 137-amino-acid chain; its full sequence is uncharacterized protein (137 aa).

This is an uncharacterized protein from Bos taurus (Bovine).